The following is a 336-amino-acid chain: tRNA N6-adenosine threonylcarbamoyltransferase (336 aa).

Fe cation is bound by residues His114 and His118. Substrate is bound by residues 136–140 (LVSGG), Asp169, Gly182, Asp186, and Asn275. Asp301 lines the Fe cation pocket.

The protein belongs to the KAE1 / TsaD family. It depends on Fe(2+) as a cofactor.

It is found in the cytoplasm. It carries out the reaction L-threonylcarbamoyladenylate + adenosine(37) in tRNA = N(6)-L-threonylcarbamoyladenosine(37) in tRNA + AMP + H(+). Its function is as follows. Required for the formation of a threonylcarbamoyl group on adenosine at position 37 (t(6)A37) in tRNAs that read codons beginning with adenine. Is involved in the transfer of the threonylcarbamoyl moiety of threonylcarbamoyl-AMP (TC-AMP) to the N6 group of A37, together with TsaE and TsaB. TsaD likely plays a direct catalytic role in this reaction. The sequence is that of tRNA N6-adenosine threonylcarbamoyltransferase from Streptococcus pneumoniae serotype 19F (strain G54).